Here is an 87-residue protein sequence, read N- to C-terminus: Large ribosomal subunit protein bL27 (87 aa).

The disordered stretch occupies residues 1-21 (MAHKKAGGSSRNGRDSESKRL).

The protein belongs to the bacterial ribosomal protein bL27 family.

This is Large ribosomal subunit protein bL27 from Burkholderia multivorans (strain ATCC 17616 / 249).